Here is a 116-residue protein sequence, read N- to C-terminus: MNLIMTILTITAALSLILATVSFWLPQMNPDAEKLSPYECGFDPLGSARLPFSLRFFLVAILFLLFDLEIALLLPLPWGDQLNNPTGTFFWATTVLILLTLGLIYEWTQGGLEWAE.

3 helical membrane-spanning segments follow: residues 3–23 (LIMT…TVSF), 56–76 (FFLV…LLPL), and 87–107 (GTFF…IYEW).

It belongs to the complex I subunit 3 family.

The protein localises to the mitochondrion membrane. The catalysed reaction is a ubiquinone + NADH + 5 H(+)(in) = a ubiquinol + NAD(+) + 4 H(+)(out). Its function is as follows. Core subunit of the mitochondrial membrane respiratory chain NADH dehydrogenase (Complex I) that is believed to belong to the minimal assembly required for catalysis. Complex I functions in the transfer of electrons from NADH to the respiratory chain. The immediate electron acceptor for the enzyme is believed to be ubiquinone. This chain is NADH-ubiquinone oxidoreductase chain 3 (MT-ND3), found in Carassius auratus (Goldfish).